A 129-amino-acid chain; its full sequence is Small ribosomal subunit protein uS11 (129 aa).

This sequence belongs to the universal ribosomal protein uS11 family. As to quaternary structure, part of the 30S ribosomal subunit. Interacts with proteins S7 and S18. Binds to IF-3.

Functionally, located on the platform of the 30S subunit, it bridges several disparate RNA helices of the 16S rRNA. Forms part of the Shine-Dalgarno cleft in the 70S ribosome. This is Small ribosomal subunit protein uS11 from Haemophilus ducreyi (strain 35000HP / ATCC 700724).